Reading from the N-terminus, the 781-residue chain is uncharacterized protein (781 aa).

A disordered region spans residues 1–34; sequence MNIAEEPSDEVISSGPEDTDICSQQTSASAEAGD. Position 29 is a phosphoserine (Ser-29). RRM domains are found at residues 195-273 and 295-418; these read GNIF…YHVE and RCLF…KAVQ. Residues 345–375 form a disordered region; it reads SNTRSSSSVSFNEEGSVESNKSSNNTNGNAQ. Residues 347–364 show a composition bias toward low complexity; the sequence is TRSSSSVSFNEEGSVESN. Positions 365–374 are enriched in polar residues; sequence KSSNNTNGNA. Phosphoserine is present on residues Ser-433, Ser-435, Ser-482, and Ser-485. Residue Thr-486 is modified to Phosphothreonine. Ser-501 bears the Phosphoserine mark. The RRM 3 domain occupies 540–638; that stretch reads SNLYVKHIPL…QVLSVSFAQK (99 aa). Residues 640–668 form a disordered region; it reads GNLSSSDDDDQSQTDNSSKFQNFQPHNDY.

In terms of assembly, interacts with RBG1.

This is an uncharacterized protein from Saccharomyces cerevisiae (strain ATCC 204508 / S288c) (Baker's yeast).